A 399-amino-acid chain; its full sequence is Guanine nucleotide-binding protein G(f) subunit alpha (399 aa).

Residues 46-399 form the G-alpha domain; sequence TTVKILLLGT…SENVSSMGLF (354 aa). A G1 motif region spans residues 49–62; sequence KILLLGTAESGKTT. GTP contacts are provided by residues 54 to 61, 188 to 194, 221 to 225, 290 to 293, and alanine 371; these read GTAESGKT, LHSRKIT, DVGGQ, and NKYD. The segment at 186 to 194 is G2 motif; the sequence is DILHSRKIT. Threonine 194 provides a ligand contact to Mg(2+). Residues 217–226 form a G3 motif region; that stretch reads FQMYDVGGQR. A G4 motif region spans residues 286–293; it reads IVFLNKYD. Residues 369–374 form a G5 motif region; that stretch reads TVATDT.

Belongs to the G-alpha family. As to quaternary structure, g proteins are composed of 3 units; alpha, beta and gamma. The alpha chain contains the guanine nucleotide binding site. In terms of tissue distribution, during embryogenesis, expressed primarily in the developing gut and transiently in the amnioserosa.

Functionally, guanine nucleotide-binding proteins (G proteins) are involved as modulators or transducers in various transmembrane signaling systems. The protein is Guanine nucleotide-binding protein G(f) subunit alpha (Galphaf) of Drosophila melanogaster (Fruit fly).